Reading from the N-terminus, the 149-residue chain is L-alanine exporter AlaE (149 aa).

Transmembrane regions (helical) follow at residues 16–36, 46–66, 85–105, and 112–132; these read FAMV…LSGM, LVAI…RDLF, ILAY…VVGA, and AAVS…GYFL.

The protein belongs to the AlaE exporter family.

It localises to the cell inner membrane. Its function is as follows. Exports L-alanine. In Shigella flexneri, this protein is L-alanine exporter AlaE.